Reading from the N-terminus, the 148-residue chain is Large ribosomal subunit protein uL13 (148 aa).

Residues Pro128 to Lys148 are disordered.

It belongs to the universal ribosomal protein uL13 family. Part of the 50S ribosomal subunit.

In terms of biological role, this protein is one of the early assembly proteins of the 50S ribosomal subunit, although it is not seen to bind rRNA by itself. It is important during the early stages of 50S assembly. The polypeptide is Large ribosomal subunit protein uL13 (Saccharopolyspora erythraea (strain ATCC 11635 / DSM 40517 / JCM 4748 / NBRC 13426 / NCIMB 8594 / NRRL 2338)).